The chain runs to 357 residues: Putative minor fimbrial subunit PmfE (357 aa).

The N-terminal stretch at 1-28 is a signal peptide; sequence MILNKKNIHSKSVMLFCAGIVSLMPLHA.

The protein resides in the fimbrium. This Proteus mirabilis (strain HI4320) protein is Putative minor fimbrial subunit PmfE (pmfE).